Here is a 386-residue protein sequence, read N- to C-terminus: DNA methyltransferase CcrM (386 aa).

In terms of domain architecture, RAMA spans 280 to 382 (LGKAELTVMT…LRKIIREQMA (103 aa)).

This sequence belongs to the N(4)/N(6)-methyltransferase family.

The catalysed reaction is a 2'-deoxyadenosine in DNA + S-adenosyl-L-methionine = an N(6)-methyl-2'-deoxyadenosine in DNA + S-adenosyl-L-homocysteine + H(+). Its function is as follows. A beta subtype methylase that recognizes the double-stranded sequence 5'-GANTC-3' and methylates A-2 on both strands. CcrM-mediated methylation has important cellular functions. Contributes to the accurate cell-cycle control of DNA replication and cellular morphology. In Brucella ovis (strain ATCC 25840 / 63/290 / NCTC 10512), this protein is DNA methyltransferase CcrM (ccrM).